Reading from the N-terminus, the 182-residue chain is ADP-ribosylation factor-like protein 11 (182 aa).

Gly-2 is lipidated: N-myristoyl glycine. Residues 19-26 (GLDSAGKT), 63-67 (DVGGQ), and 122-125 (NKQE) contribute to the GTP site.

This sequence belongs to the small GTPase superfamily. Arf family.

May play a role in apoptosis. May act as a tumor suppressor. In Bos taurus (Bovine), this protein is ADP-ribosylation factor-like protein 11 (ARL11).